Consider the following 318-residue polypeptide: tRNA uridine(34) hydroxylase (318 aa).

In terms of domain architecture, Rhodanese spans 123–217 (EDDDTVIIDA…YGKDPETKGE (95 aa)). Residue Cys-177 is the Cysteine persulfide intermediate of the active site.

Belongs to the TrhO family.

The enzyme catalyses uridine(34) in tRNA + AH2 + O2 = 5-hydroxyuridine(34) in tRNA + A + H2O. Catalyzes oxygen-dependent 5-hydroxyuridine (ho5U) modification at position 34 in tRNAs. The protein is tRNA uridine(34) hydroxylase of Staphylococcus aureus (strain MSSA476).